The primary structure comprises 163 residues: Epididymal-specific lipocalin-6 (163 aa).

The N-terminal stretch at 1 to 20 (MGGLLLAAFLALVSVPRAQA) is a signal peptide.

This sequence belongs to the calycin superfamily. Lipocalin family. In terms of tissue distribution, predominantly expressed in epididymis.

It is found in the secreted. Its function is as follows. May play a role in male fertility. The sequence is that of Epididymal-specific lipocalin-6 (LCN6) from Homo sapiens (Human).